Consider the following 154-residue polypeptide: Superoxide dismutase [Cu-Zn] (154 aa).

His47, His49, and His64 together coordinate Cu cation. Cys58 and Cys147 are disulfide-bonded. Zn(2+)-binding residues include His64, His72, His81, and Asp84. Cu cation is bound at residue His121. The span at 124–137 (TDDLGKGENEESKK) shows a compositional bias: basic and acidic residues. The segment at 124–144 (TDDLGKGENEESKKTGNAGTR) is disordered. Arg144 is a substrate binding site.

This sequence belongs to the Cu-Zn superoxide dismutase family. In terms of assembly, homodimer. Requires Cu cation as cofactor. Zn(2+) is required as a cofactor.

The protein localises to the cytoplasm. It carries out the reaction 2 superoxide + 2 H(+) = H2O2 + O2. Destroys radicals which are normally produced within the cells and which are toxic to biological systems. In Botryotinia fuckeliana (Noble rot fungus), this protein is Superoxide dismutase [Cu-Zn] (sod1).